The following is a 498-amino-acid chain: MRINPTTSGPEVSALEKKNLGRIAQIIGPVLDVAFPPGKMPNIYNALIVKGRDTVGQQINVTCEVQQLLGNNRIRAVAMSATEGLMRGMEVIDTGAALSVPVGGATLGRIFNVLGEPIDNLGPVDTRTTSPIHRSAPAFIQLDTKLAIFETGIKVVDLLAPYRRGGKIGLFGGAGVGKTVLIMELINNIAKAHGGVSVFGGVGERTREGNDLYMEMKESGVINEQNIAESKVALVYGQMNEPPGARMRVGLTALTMAEYFRDVNEQDVLLFIDNIFRFVQAGSEVSALLGRMPSAVGYQPTLSTEMGSLQERITSTKEGSITSIQAVYVPADDLTDPAPATTFAHLDATTVLSRGLAAKGIYPAVDPLDSTSTMLQPRIVGEEHYETAQRVKQTLQRYKELQDIIAILGLDELSEEDRLTVARARKIERFLSQPFFVAEVFTGSPGKYVSLAETIRGFKLILSGELDGLPEQAFYLVGNIDEATAKATNLEMESNLKK.

172–179 (GGAGVGKT) is a binding site for ATP.

The protein belongs to the ATPase alpha/beta chains family. As to quaternary structure, F-type ATPases have 2 components, CF(1) - the catalytic core - and CF(0) - the membrane proton channel. CF(1) has five subunits: alpha(3), beta(3), gamma(1), delta(1), epsilon(1). CF(0) has four main subunits: a(1), b(1), b'(1) and c(9-12).

The protein resides in the plastid. Its subcellular location is the chloroplast thylakoid membrane. It catalyses the reaction ATP + H2O + 4 H(+)(in) = ADP + phosphate + 5 H(+)(out). In terms of biological role, produces ATP from ADP in the presence of a proton gradient across the membrane. The catalytic sites are hosted primarily by the beta subunits. The chain is ATP synthase subunit beta, chloroplastic from Glycine max (Soybean).